Here is a 471-residue protein sequence, read N- to C-terminus: 3-isopropylmalate dehydratase large subunit (471 aa).

Positions 346, 406, and 409 each coordinate [4Fe-4S] cluster.

The protein belongs to the aconitase/IPM isomerase family. LeuC type 1 subfamily. Heterodimer of LeuC and LeuD. Requires [4Fe-4S] cluster as cofactor.

The catalysed reaction is (2R,3S)-3-isopropylmalate = (2S)-2-isopropylmalate. Its pathway is amino-acid biosynthesis; L-leucine biosynthesis; L-leucine from 3-methyl-2-oxobutanoate: step 2/4. In terms of biological role, catalyzes the isomerization between 2-isopropylmalate and 3-isopropylmalate, via the formation of 2-isopropylmaleate. The polypeptide is 3-isopropylmalate dehydratase large subunit (Bacillus pumilus (strain SAFR-032)).